The sequence spans 376 residues: TraB domain-containing protein (376 aa).

An N-acetylmethionine modification is found at methionine 1. At threonine 64 the chain carries Phosphothreonine.

The polypeptide is TraB domain-containing protein (Trabd) (Mus musculus (Mouse)).